Here is a 712-residue protein sequence, read N- to C-terminus: Serrate RNA effector molecule homolog (712 aa).

Disordered regions lie at residues 1–80 (MVDS…DSIY), 214–256 (ADIK…TEKS), and 620–712 (QRPV…DDIP). Basic and acidic residues-rich tracts occupy residues 8–26 (GDRRRDKFARERRDEDYRR) and 34–54 (YDNKRPGGRRDDYQVKRSRGD). Over residues 65–79 (RSGNGSDLPTESDSI) the composition is skewed to polar residues. Positions 214-236 (ADIKKDENGNGTEQPKEEPEVKQ) are enriched in basic and acidic residues. Acidic residues predominate over residues 240-251 (ATEELEEGAIED). Basic and acidic residues-rich tracts occupy residues 621-637 (RPVDCEPKQAPRDDHRG) and 645-655 (GYGRERDDDRG). Gly residues predominate over residues 656–668 (PGGGGRNSFGGGG).

It belongs to the ARS2 family.

The protein resides in the nucleus. Acts as a mediator between the cap-binding complex (CBC) and the primary microRNAs (miRNAs) processing machinery. Contributes to the stability and delivery of capped primary miRNA transcripts to the primary miRNA processing complex, thereby playing a role in RNA-mediated gene silencing (RNAi) by miRNAs. In Caenorhabditis elegans, this protein is Serrate RNA effector molecule homolog.